Consider the following 322-residue polypeptide: Sideroflexin-1 (322 aa).

N-acetylserine is present on S2. Residues 2-102 are Mitochondrial matrix-facing; that stretch reads SGEVPPNINI…MSAQVPMNMT (101 aa). A helical transmembrane segment spans residues 103–120; sequence ITGCMMTFYRTTPAVLFW. Residues 121 to 146 lie on the Mitochondrial intermembrane side of the membrane; sequence QWINQSFNAVVNYTNRSGDAPLTVNE. The helical transmembrane segment at 147–167 threads the bilayer; it reads LGTAYVSATTGAVATALGLNA. Topologically, residues 168–174 are mitochondrial matrix; it reads LTKHVSP. A helical membrane pass occupies residues 175–195; that stretch reads LIGRFVPFAAVAAANCINIPL. The Mitochondrial intermembrane portion of the chain corresponds to 196 to 228; it reads MRQRELKVGIPVTDENGTRLGESTNAAKQAITQ. The helical transmembrane segment at 229–249 threads the bilayer; that stretch reads VVISRILMAAPGMAIPPFIMN. Topologically, residues 250 to 266 are mitochondrial matrix; that stretch reads TLEKKAFLKRFPWMSAP. The helical transmembrane segment at 267–287 threads the bilayer; the sequence is IQVTLVGFCLVFATPLCCALF. At 288–322 the chain is on the mitochondrial intermembrane side; the sequence is PQKSSMSVTSLEDDLQASIQKSHPELRRVYFNKGL.

This sequence belongs to the sideroflexin family.

The protein localises to the mitochondrion inner membrane. It catalyses the reaction L-serine(in) = L-serine(out). The catalysed reaction is L-alanine(in) = L-alanine(out). It carries out the reaction L-cysteine(in) = L-cysteine(out). Functionally, amino acid transporter importing serine, an essential substrate of the mitochondrial branch of the one-carbon pathway, into mitochondria. Mitochondrial serine is then converted to glycine and formate, which exits to the cytosol where it is used to generate the charged folates that serve as one-carbon donors. May also transport other amino acids including alanine and cysteine. This chain is Sideroflexin-1 (Sfxn1), found in Rattus norvegicus (Rat).